A 170-amino-acid chain; its full sequence is Putative 4-hydroxy-4-methyl-2-oxoglutarate aldolase (170 aa).

Residues 81-84 and Arg-103 contribute to the substrate site; that span reads GDII. Asp-104 provides a ligand contact to a divalent metal cation.

The protein belongs to the class II aldolase/RraA-like family. As to quaternary structure, homotrimer. A divalent metal cation is required as a cofactor.

The catalysed reaction is 4-hydroxy-4-methyl-2-oxoglutarate = 2 pyruvate. It carries out the reaction oxaloacetate + H(+) = pyruvate + CO2. Functionally, catalyzes the aldol cleavage of 4-hydroxy-4-methyl-2-oxoglutarate (HMG) into 2 molecules of pyruvate. Also contains a secondary oxaloacetate (OAA) decarboxylase activity due to the common pyruvate enolate transition state formed following C-C bond cleavage in the retro-aldol and decarboxylation reactions. The protein is Putative 4-hydroxy-4-methyl-2-oxoglutarate aldolase of Corynebacterium efficiens (strain DSM 44549 / YS-314 / AJ 12310 / JCM 11189 / NBRC 100395).